A 148-amino-acid polypeptide reads, in one-letter code: Large ribosomal subunit protein bL9 (148 aa).

It belongs to the bacterial ribosomal protein bL9 family.

Binds to the 23S rRNA. The protein is Large ribosomal subunit protein bL9 of Heliobacterium modesticaldum (strain ATCC 51547 / Ice1).